The following is a 110-amino-acid chain: Phosphoribosyl-AMP cyclohydrolase (110 aa).

Aspartate 80 is a binding site for Mg(2+). Cysteine 81 lines the Zn(2+) pocket. Residues aspartate 82 and aspartate 84 each coordinate Mg(2+). Zn(2+) contacts are provided by cysteine 97 and cysteine 104.

This sequence belongs to the PRA-CH family. Homodimer. Mg(2+) is required as a cofactor. The cofactor is Zn(2+).

The protein localises to the cytoplasm. It catalyses the reaction 1-(5-phospho-beta-D-ribosyl)-5'-AMP + H2O = 1-(5-phospho-beta-D-ribosyl)-5-[(5-phospho-beta-D-ribosylamino)methylideneamino]imidazole-4-carboxamide. It participates in amino-acid biosynthesis; L-histidine biosynthesis; L-histidine from 5-phospho-alpha-D-ribose 1-diphosphate: step 3/9. Its function is as follows. Catalyzes the hydrolysis of the adenine ring of phosphoribosyl-AMP. The sequence is that of Phosphoribosyl-AMP cyclohydrolase from Clostridium botulinum (strain 657 / Type Ba4).